Reading from the N-terminus, the 364-residue chain is Spermidine/putrescine import ATP-binding protein PotA (364 aa).

The ABC transporter domain maps to 5–235 (LSFKSVSKQY…PVNRFVADFI (231 aa)). Residue 37–44 (GPSGCGKT) participates in ATP binding.

This sequence belongs to the ABC transporter superfamily. Spermidine/putrescine importer (TC 3.A.1.11.1) family. As to quaternary structure, the complex is composed of two ATP-binding proteins (PotA), two transmembrane proteins (PotB and PotC) and a solute-binding protein (PotD).

The protein localises to the cell membrane. The enzyme catalyses ATP + H2O + polyamine-[polyamine-binding protein]Side 1 = ADP + phosphate + polyamineSide 2 + [polyamine-binding protein]Side 1.. Functionally, part of the ABC transporter complex PotABCD involved in spermidine/putrescine import. Responsible for energy coupling to the transport system. In Staphylococcus saprophyticus subsp. saprophyticus (strain ATCC 15305 / DSM 20229 / NCIMB 8711 / NCTC 7292 / S-41), this protein is Spermidine/putrescine import ATP-binding protein PotA.